A 36-amino-acid polypeptide reads, in one-letter code: Photosystem I reaction center subunit VIII (36 aa).

The helical transmembrane segment at 9–29 (IFVPLVGLVFPAIAMASLSLY) threads the bilayer.

Belongs to the PsaI family.

The protein resides in the plastid. Its subcellular location is the chloroplast thylakoid membrane. In terms of biological role, may help in the organization of the PsaL subunit. This Phalaenopsis aphrodite subsp. formosana (Moth orchid) protein is Photosystem I reaction center subunit VIII.